The chain runs to 113 residues: MQFSTVSFAIFAILPAMVAAMPAETSPVPKPALPVFEELCPDAERQKCAESTDNLKRCLQINGASICVIDCGSQTTCRTQCKQQLKNEKANGFCTVGDNPCICNLNGAANSAH.

An N-terminal signal peptide occupies residues methionine 1 to alanine 20.

It localises to the secreted. Functionally, secreted effector involved in biotrophic colonization of plant cells. This Pyricularia oryzae (strain 70-15 / ATCC MYA-4617 / FGSC 8958) (Rice blast fungus) protein is Biotrophy-associated secreted protein 3.